The primary structure comprises 447 residues: Probable arabinosyltransferase ARAD1 (447 aa).

Topologically, residues 1-6 (MARKSS) are cytoplasmic. A helical; Signal-anchor for type II membrane protein membrane pass occupies residues 7–29 (LLKRAAIAVVSVIAIYVILNASV). At 30–447 (SRSLPSSSDL…TNQTGLITSI (418 aa)) the chain is on the lumenal side. Over residues 32 to 41 (SLPSSSDLPR) the composition is skewed to low complexity. The interval 32–52 (SLPSSSDLPRQLIREDDDDEG) is disordered. N-linked (GlcNAc...) asparagine glycans are attached at residues Asn427, Asn432, and Asn439.

This sequence belongs to the glycosyltransferase 47 family. Homodimer and heterodimer with ARAD2. As to expression, expressed in root vasculature, cotyledons, leaves, stems, vascular tissue of sepals, petals and stamens, pollen grains, mature siliques and abscission region of seeds.

It is found in the golgi apparatus membrane. Probable arabinosyl transferase responsible for the polymerization of arabinose into the arabinan of arabinogalactan. May function as inverting enzyme using UDP-beta-L-arabinopyranoside. May be important for arabinan side chains of rhamnogalacturonan I (RG-I), a major component of pectins. Cell wall pectic arabinans are involved in thigmomorphogenesis response of inflorescence stems to mechanical stress. This is Probable arabinosyltransferase ARAD1 (ARAD1) from Arabidopsis thaliana (Mouse-ear cress).